Here is a 278-residue protein sequence, read N- to C-terminus: MNPNSHPITKSHLFHIVDPSPWPVLTSFALLLLVIGGVSFMHGYKFNIYILSAGVISVGYCLYSWWRDVVKEGIVEHQHTSPVRKGLQIGMALFILTEIVFFGVFFASFFKSSLSPVGLLDGVWVVKQGIWPPPTIKTFDPFDIPFINTLILLLSGTTVTWAHYALEEKNQKDCVTALALTILLGIFFTTMQAYEYYHAAFKFTDGIYASNFYLATGFHGAHVIIGTIFLIVCYFRAKRGDFTTEGNGHLGFEFAAWYWHFVDVVWLFLFTFVYIFGS.

6 helical membrane passes run P21–M41, F46–W66, I89–F109, C174–Y194, F212–V232, and A256–F276.

Belongs to the cytochrome c oxidase subunit 3 family.

Its subcellular location is the cell membrane. The enzyme catalyses 4 Fe(II)-[cytochrome c] + O2 + 8 H(+)(in) = 4 Fe(III)-[cytochrome c] + 2 H2O + 4 H(+)(out). This Rickettsia felis (strain ATCC VR-1525 / URRWXCal2) (Rickettsia azadi) protein is Probable cytochrome c oxidase subunit 3 (ctaE).